Consider the following 349-residue polypeptide: 3-dehydroquinate synthase (349 aa).

Residues 63 to 68, 97 to 101, 121 to 122, Lys134, Lys143, and 161 to 164 contribute to the NAD(+) site; these read DGEDYK, GVIGD, TT, and FLQT. Positions 176, 235, and 252 each coordinate Zn(2+).

Belongs to the sugar phosphate cyclases superfamily. Dehydroquinate synthase family. It depends on Co(2+) as a cofactor. Requires Zn(2+) as cofactor. The cofactor is NAD(+).

The protein localises to the cytoplasm. It catalyses the reaction 7-phospho-2-dehydro-3-deoxy-D-arabino-heptonate = 3-dehydroquinate + phosphate. Its pathway is metabolic intermediate biosynthesis; chorismate biosynthesis; chorismate from D-erythrose 4-phosphate and phosphoenolpyruvate: step 2/7. Functionally, catalyzes the conversion of 3-deoxy-D-arabino-heptulosonate 7-phosphate (DAHP) to dehydroquinate (DHQ). The sequence is that of 3-dehydroquinate synthase from Nitratiruptor sp. (strain SB155-2).